A 290-amino-acid chain; its full sequence is Arylamine N-acetyltransferase 1 (290 aa).

Methionine 1 is subject to N-acetylmethionine. Cysteine 68 serves as the catalytic Acyl-thioester intermediate. Serine 103 provides a ligand contact to CoA. Substrate is bound at residue 106–107 (VH). Catalysis depends on residues histidine 107 and aspartate 122. Tyrosine 208 is a CoA binding site.

This sequence belongs to the arylamine N-acetyltransferase family.

It is found in the cytoplasm. It catalyses the reaction an arylamine + acetyl-CoA = an N-acetylarylamine + CoA. Its function is as follows. Participates in the detoxification of a plethora of hydrazine and arylamine drugs. Acetylates both arylamines and arylalkylamines. This Rattus norvegicus (Rat) protein is Arylamine N-acetyltransferase 1 (Nat1).